A 79-amino-acid chain; its full sequence is Large ribosomal subunit protein bL31 (79 aa).

The protein belongs to the bacterial ribosomal protein bL31 family. Type A subfamily. In terms of assembly, part of the 50S ribosomal subunit.

Binds the 23S rRNA. The chain is Large ribosomal subunit protein bL31 (rpmE) from Rickettsia bellii (strain RML369-C).